The primary structure comprises 443 residues: Tol-Pal system protein TolB (443 aa).

The N-terminal stretch at M1 to A18 is a signal peptide.

Belongs to the TolB family. The Tol-Pal system is composed of five core proteins: the inner membrane proteins TolA, TolQ and TolR, the periplasmic protein TolB and the outer membrane protein Pal. They form a network linking the inner and outer membranes and the peptidoglycan layer.

It localises to the periplasm. Functionally, part of the Tol-Pal system, which plays a role in outer membrane invagination during cell division and is important for maintaining outer membrane integrity. This chain is Tol-Pal system protein TolB, found in Rickettsia prowazekii (strain Madrid E).